The following is a 1032-amino-acid chain: Putative oxidoreductase YgfK (1032 aa).

A 4Fe-4S ferredoxin-type domain is found at 928 to 958; it reads RFQTLHLDAYCNECGNCAQFCPWNGKPYKDK. [4Fe-4S] cluster contacts are provided by Cys938, Cys941, Cys944, and Cys948.

[4Fe-4S] cluster serves as cofactor.

In terms of biological role, could be an iron-sulfur flavoprotein with NADPH:O(2) oxidoreductase activity. In Escherichia coli O157:H7, this protein is Putative oxidoreductase YgfK (ygfK).